We begin with the raw amino-acid sequence, 788 residues long: Endonuclease MutS2 (788 aa).

335 to 342 (GPNTGGKT) lines the ATP pocket. The tract at residues 688 to 708 (VKSASKTKKRSGGTSITKQSA) is disordered. The span at 699-708 (GGTSITKQSA) shows a compositional bias: polar residues. Residues 713-788 (LDLRGVRVEE…GHGVTIIELK (76 aa)) form the Smr domain.

It belongs to the DNA mismatch repair MutS family. MutS2 subfamily. In terms of assembly, homodimer. Binds to stalled ribosomes, contacting rRNA.

In terms of biological role, endonuclease that is involved in the suppression of homologous recombination and thus may have a key role in the control of bacterial genetic diversity. Its function is as follows. Acts as a ribosome collision sensor, splitting the ribosome into its 2 subunits. Detects stalled/collided 70S ribosomes which it binds and splits by an ATP-hydrolysis driven conformational change. Acts upstream of the ribosome quality control system (RQC), a ribosome-associated complex that mediates the extraction of incompletely synthesized nascent chains from stalled ribosomes and their subsequent degradation. Probably generates substrates for RQC. The protein is Endonuclease MutS2 of Exiguobacterium sibiricum (strain DSM 17290 / CCUG 55495 / CIP 109462 / JCM 13490 / 255-15).